Consider the following 418-residue polypeptide: Serine proteinase inhibitor 2.4 (418 aa).

Positions 1 to 28 are cleaved as a signal peptide; that stretch reads MAFIAALGIFMAGICPAVLCFPNGTLGR. Asn-23, Asn-38, Asn-104, and Asn-269 each carry an N-linked (GlcNAc...) asparagine glycan.

This sequence belongs to the serpin family.

The protein resides in the secreted. This is Serine proteinase inhibitor 2.4 from Apodemus sylvaticus (European woodmouse).